The following is a 596-amino-acid chain: Nitrite reductase (596 aa).

Positions 1–29 are cleaved as a signal peptide; that stretch reads MRQRTPFARPGLLASAALALVLGPLAVAA. Residues 30 to 76 form an N-terminal tail region; that stretch reads QEQAAPPKDPAAALEDHKTKTDNRYEPSLDNLAQQDVAALGAPEGIP. A heme c-binding site is contributed by His46. Residues Tyr54 and Ser57 each contribute to the heme d1 site. Residues 77 to 162 form the Cytochrome c domain; sequence ALSDAQYNEA…ANYLLLDPAA (86 aa). Residues Cys94, Cys97, His98, Lys108, and Tyr122 each contribute to the heme c site. Positions 138, 203, 229, 232, 245, 272, 292, 420, 536, and 583 each coordinate heme d1. Positions 163-596 are D1-heme domain; sequence PPEFGMKEMR…NVYNTMTDTY (434 aa).

In terms of assembly, homodimer. The cofactor is heme c. It depends on heme as a cofactor.

The protein localises to the periplasm. It carries out the reaction nitric oxide + Fe(III)-[cytochrome c] + H2O = Fe(II)-[cytochrome c] + nitrite + 2 H(+). The catalysed reaction is A + NH4(+) + H2O = hydroxylamine + AH2 + H(+). Inactivation of this cytochrome oxidase results in the loss of nitrite and nitric oxide reductase activities, but not of nitrous oxide reductase activity. This Paracoccus denitrificans (strain Pd 1222) protein is Nitrite reductase (nirS).